Reading from the N-terminus, the 268-residue chain is Microtubule-associated protein RP/EB family member 1 (268 aa).

An N-acetylalanine modification is found at A2. The region spanning 14–116 is the Calponin-homology (CH) domain; that stretch reads NLSRHDMLAW…FVQWFKKFFD (103 aa). K66 is subject to N6-crotonyllysine. Y124 is modified (phosphotyrosine). Residues 124 to 268 are interaction with MTUS2/TIP150; it reads YDPVAARQGQ…GGPQEEQEEY (145 aa). The disordered stretch occupies residues 146-191; sequence LSKPKKPLGSGSAAPQRPIATQRTTAAPKAGPGMVRKNPGMGNGDD. S155 carries the phosphoserine modification. The region spanning 185–255 is the EB1 C-terminal domain; that stretch reads GMGNGDDEAA…LYATDEGFVI (71 aa). Residues 206–211 are interaction with APC; that stretch reads TVEDLE. The segment at 208–268 is DCTN1-binding; it reads EDLEKERDFY…GGPQEEQEEY (61 aa). K220 is modified (N6-acetyllysine). The tract at residues 220-242 is APC-binding; it reads KLRNIELICQENEGENDPVLQRI. The interval 232–255 is interaction with SKA1; that stretch reads EGENDPVLQRIVDILYATDEGFVI.

The protein belongs to the MAPRE family. In terms of assembly, homodimer. Heterodimer with MAPRE3. Interacts with DCTN1, DCTN2, TERF1 and dynein intermediate chain. Interaction with DIAPH1 and DIAPH2. Interacts (via C-terminal residues 206-211) with APC (via C-terminal residues 2674-2845); the interaction inhibits association with and bundling of F-actin. Interacts with CLASP2, DST, KIF2C and STIM1; probably required for their targeting to the growing microtubule plus ends. Interacts with MTUS2; interaction is direct and probably targets MTUS2 to microtubules. Interacts (via C-terminus) with SKA1 (via SXIP motif); the interaction is direct and stabilizes the kinetochore-microtubule attachment of the SKA1 complex. Interacts with APC2. Interacts with CLASP1. Interacts with CDK5RAP2. According to another report, MAPRE1 does not interact with CDK5RAP2. Interacts with MACF1. Interacts with RABL2/RABL2A; binds preferentially to GTP-bound RABL2. Interacts with KCNAB2. Interacts (via C-terminus) with CLIP1. Interacts with SLAIN2 and SLAIN1. Interacts with KIF18B; this interaction is required for efficient accumulation of KIF18B at microtubule plus ends. Interacts with MISP. Interacts with KNSTRN. Interacts with NCKAP5L. Interacts with AKAP9. Interacts with PDE4DIP; this interaction, which is PDE4DIP isoform-specific, is required for its recruitment to the Golgi apparatus. Interacts with CAMSAP2. May form a pericentrosomal complex with AKAP9, CDK5RAP2 and PDE4DIP isoform 2/MMG8/SMYLE; within this complex, MAPRE1 binding to CDK5RAP2 may be mediated by PDE4DIP. Contrary to other mammalian species, does not interact with CDK5RAP2, possibly due to the lack of conservation of the MAPRE1-binding motif in rat CDK5RAP2. Interacts with AKNA. Interacts with GAS2L1, GAS2L2, and GAS2L3. Interacts with RARRES1 and AGBL2. Acetylation at Lys-220 by KAT2B/PCAF promotes dynamic kinetochore-microtubule interactions in early mitosis. Post-translationally, crotonylated by KAT5 during mitosis, promoting astral microtubule plasticity and dynamic connection between astral microtubules and the cortex during mitotic chromosome segregation, thereby ensuring accurate spindle positioning in mitosis. Decrotonylated by HDAC3.

Its subcellular location is the cytoplasm. The protein resides in the cytoskeleton. The protein localises to the microtubule organizing center. It is found in the centrosome. It localises to the golgi apparatus. Its subcellular location is the spindle. The protein resides in the spindle pole. Functionally, plus-end tracking protein (+TIP) that binds to the plus-end of microtubules and regulates the dynamics of the microtubule cytoskeleton. Recruits other +TIP proteins to microtubules by binding to a conserved Ser-X-Leu-Pro (SXLP) motif in their polypeptide chains. Promotes cytoplasmic microtubule nucleation and elongation. Involved in mitotic spindle positioning by stabilizing microtubules and promoting dynamic connection between astral microtubules and the cortex during mitotic chromosome segregation. Assists chromosome alignment in metaphase by recruiting the SKA complex to the spindle and stabilizing its interactions with microtubule bundles (K-fibers). Also acts as a regulator of minus-end microtubule organization: interacts with the complex formed by AKAP9 and PDE4DIP, leading to recruit CAMSAP2 to the Golgi apparatus, thereby tethering non-centrosomal minus-end microtubules to the Golgi, an important step for polarized cell movement. Promotes elongation of CAMSAP2-decorated microtubule stretches on the minus-end of microtubules. Acts as a regulator of autophagosome transport via interaction with CAMSAP2. Functions downstream of Rho GTPases and DIAPH1 in stable microtubule formation. May play a role in cell migration. This chain is Microtubule-associated protein RP/EB family member 1 (Mapre1), found in Rattus norvegicus (Rat).